The primary structure comprises 555 residues: Bicyclo-germacrene synthase (555 aa).

Mg(2+) is bound by residues aspartate 311 and glutamate 315. The short motif at 311–315 is the DDXXD motif element; sequence DDTYE. 2 homodimerization regions span residues 316–322 and 392–429; these read YATLDEL and EAKWIYNNSIPTVEEYMKVAFVTCGYMMLSTTSLVGVG. Aspartate 459 and glutamate 467 together coordinate Mg(2+).

Belongs to the terpene synthase family. As to quaternary structure, homodimer. Mn(2+) is required as a cofactor. Requires Mg(2+) as cofactor. As to expression, expressed in peltate glandular trichomes. Present at low levels in flowers, leaves and stems.

The catalysed reaction is (2E,6E)-farnesyl diphosphate = bicyclogermacrene + diphosphate. It catalyses the reaction (2E)-geranyl diphosphate = terpinolene + diphosphate. It carries out the reaction (2E)-geranyl diphosphate = (4R)-limonene + diphosphate. The enzyme catalyses (2E)-geranyl diphosphate + H2O = (2E)-geraniol + diphosphate. The catalysed reaction is (2E,6E)-farnesyl diphosphate = allo-aromadendrene + diphosphate. Its pathway is secondary metabolite biosynthesis; terpenoid biosynthesis. Involved in the biosynthesis of phenolic sesquiterpenes natural products. Sesquiterpene synthase converting (2E,6E)-farnesyl diphosphate (FPP) to alloaromadendrene and bicyclo-germacrene. The product formation is dependent on the metal ions present and in presence of manganese, bicyclo-germacrene is greatly favored while both alloaromadendrene and bicyclo-germacrene are produced in equivalent amounts in the presence of magnesium. Can also convert geranyl diphosphate (GPP) to terpinolene, limonene and geraniol, and this conversion is not affected by the presence of magnesium or manganese. The polypeptide is Bicyclo-germacrene synthase (TPS4) (Origanum vulgare (Wild marjoram)).